The sequence spans 286 residues: Divergent deoxyribose-phosphate aldolase-like protein (286 aa).

Homodimer. Interacts with ADF; the interaction enhances ADF activity in disassembly of filamentous actin and inhibition of actin polymerization.

The protein localises to the cytoplasm. Involved in regulation of actin dynamics. The chain is Divergent deoxyribose-phosphate aldolase-like protein from Toxoplasma gondii.